A 629-amino-acid polypeptide reads, in one-letter code: tRNA uridine 5-carboxymethylaminomethyl modification enzyme MnmG (629 aa).

FAD is bound by residues 13 to 18, Val-125, and Ser-180; that span reads GGGHAG. 273-287 is an NAD(+) binding site; that stretch reads GPRYCPSIEDKIHRF. Gln-370 is an FAD binding site.

This sequence belongs to the MnmG family. Homodimer. Heterotetramer of two MnmE and two MnmG subunits. It depends on FAD as a cofactor.

It is found in the cytoplasm. Its function is as follows. NAD-binding protein involved in the addition of a carboxymethylaminomethyl (cmnm) group at the wobble position (U34) of certain tRNAs, forming tRNA-cmnm(5)s(2)U34. This Shewanella sp. (strain ANA-3) protein is tRNA uridine 5-carboxymethylaminomethyl modification enzyme MnmG.